Here is a 438-residue protein sequence, read N- to C-terminus: Coenzyme A disulfide reductase (438 aa).

8–33 provides a ligand contact to FAD; it reads GAVAGGATCASQIRRLDKESDIIIFE. Residues Thr-15, Gln-19, Arg-22, Ser-39, and Asn-42 each contribute to the substrate site. The active-site Nucleophile is the Cys-43. Residue Cys-43 is the Redox-active of the active site. Residue Lys-71 participates in substrate binding. Position 151-166 (151-166) interacts with NADP(+); that stretch reads VLVVGAGYVSLEVLEN. 267-277 provides a ligand contact to FAD; the sequence is TNVPNIYAIGD. Position 299 (His-299) interacts with substrate. Tyr-419 lines the FAD pocket. Position 427 (Lys-427) interacts with substrate.

Belongs to the class-III pyridine nucleotide-disulfide oxidoreductase family. In terms of assembly, homodimer. Requires FAD as cofactor.

It catalyses the reaction NADP(+) + 2 CoA = CoA-disulfide + NADPH + H(+). In terms of biological role, catalyzes specifically the NADPH-dependent reduction of coenzyme A disulfide. This is Coenzyme A disulfide reductase from Staphylococcus aureus (strain bovine RF122 / ET3-1).